The following is a 330-amino-acid chain: Ribosome production factor 1 (330 aa).

2 disordered regions span residues 1 to 32 (MKAVKAPVEEMDQAECEVKEEKSASGPCFPPT) and 53 to 83 (EEKRKKRMELKKKKKKERKALDDKAPPKEVP). A compositionally biased stretch (basic residues) spans 55–70 (KRKKRMELKKKKKKER). Basic and acidic residues predominate over residues 71-83 (KALDDKAPPKEVP). A Brix domain is found at 123–306 (PKVLITTSDR…LRSLQKGTFD (184 aa)). Residues 284–301 (VGIQELGPRFTLKLRSLQ) form an RNA-binding region.

It is found in the nucleus. Its subcellular location is the nucleolus. May be required for ribosome biogenesis. This chain is Ribosome production factor 1 (rpf1), found in Danio rerio (Zebrafish).